Consider the following 387-residue polypeptide: Putative gustatory receptor 22d (387 aa).

The Cytoplasmic portion of the chain corresponds to 1–43 (MFRPRCGLRQKFVYVILKSILYSSWLLGIFPFKYEPKKRRLRR). A helical transmembrane segment spans residues 44–64 (SMWLILFGVVISSSLLILMVK). Over 65–82 (QSAEDREHGIMLDVFQRN) the chain is Extracellular. The helical transmembrane segment at 83 to 103 (ALLYQISSLMGVVGVVSICTV) threads the bilayer. Over 104–142 (HLRTLWRSKHLEEIYNGLMLLEAKYFCSNAVECPAFDGY) the chain is Cytoplasmic. A helical membrane pass occupies residues 143–163 (VIQKGVVIVVGLLAPWMVHFG). Topologically, residues 164-184 (MPDSKLPVLNVLVVSMVKLGT) are extracellular. The helical transmembrane segment at 185-205 (LLLALHYHLGVVIIYRFVWLI) threads the bilayer. At 206–252 (NRELLSLVCSLRGNHKGSSSRVRFLLKLYNKLVNLYSKLADCYDCQT) the chain is on the cytoplasmic side. Residues 253–273 (VLMMAIFLAANIIVCFYMIVY) form a helical membrane-spanning segment. Over 274–281 (RISLSKMS) the chain is Extracellular. The helical transmembrane segment at 282–302 (FFVMLIMFPLAIANNFMDFWL) threads the bilayer. Residues 303 to 363 (SMKVCDLLQK…HCGLFHVNRE (61 aa)) are Cytoplasmic-facing. The helical transmembrane segment at 364 to 384 (MGFKMFVASVLYLLYLVQFDY) threads the bilayer. The Extracellular portion of the chain corresponds to 385–387 (MNL).

Belongs to the insect chemoreceptor superfamily. Gustatory receptor (GR) family. Gr22e subfamily. In terms of tissue distribution, expressed in neurons of the dorsal pharyngeal sense organs of larvae.

It localises to the cell membrane. Its function is as follows. Probable gustatory receptor which mediates acceptance or avoidance behavior, depending on its substrates. The polypeptide is Putative gustatory receptor 22d (Drosophila melanogaster (Fruit fly)).